The following is a 242-amino-acid chain: MDLSSKPQQQLLNSLPIAGELTVTGEMGVCYKECLKNHAANLGGHALDGCGEFMPSPTATSTDPSSLRCAACGCHRNFHRRDPSENLNFLTAPPISSPSGTESPPSRHVSSPVPCSYYTSAPPHHVILSLSSGFPGPSDQDPTVVRSENSSRGAMRKRTRTKFTPEQKIKMRAFAEKAGWKINGCDEKSVREFCNEVGIERGVLKVWMHNNKYSLLNGKIREIEHGLCLNTHSNDGDGSSSS.

Residues 31 to 82 (YKECLKNHAANLGGHALDGCGEFMPSPTATSTDPSSLRCAACGCHRNFHRRD) form a ZF-HD dimerization-type; degenerate zinc finger. Disordered stretches follow at residues 83–109 (PSEN…SRHV) and 135–161 (PGPS…RTRT). Residues 156–213 (RKRTRTKFTPEQKIKMRAFAEKAGWKINGCDEKSVREFCNEVGIERGVLKVWMHNNKY) constitute a DNA-binding region (homeobox; atypical).

As to quaternary structure, homo- and heterodimer with other ZFHD proteins. Interacts with HIPP20, HIPP21, HIPP22, HIPP23, HIPP24, HIPP26, HIPP27, HIPP30 and MED25 (via ACID domain). Interacts with NAC019, NAC055 and NAC072 (via NAC binding domain). Binds to ZHD1, ZHD2, ZHD3, ZHD4, ZHD5, ZHD6, ZHD7, ZHD8, ZHD9, ZHD12, ZHD13 and ZHD14. Expressed in roots, inflorescences, open flowers and seeds. Detected in stems and seedlings.

Its subcellular location is the nucleus. Transcription factor involved in the up-regulation of several stress-inducible genes. Acts as a transcriptional activator by interacting with MED25 and NAC proteins. Involved in increased drought tolerance. This Arabidopsis thaliana (Mouse-ear cress) protein is Zinc-finger homeodomain protein 11 (ZHD11).